Reading from the N-terminus, the 317-residue chain is UV DNA damage endonuclease (317 aa).

Belongs to the uve1/UvsE family.

In terms of biological role, component in a DNA repair pathway. Removal of UV LIGHT damaged nucleotides. Recognizes pyrimidine dimers and cleave a phosphodiester bond immediately 5' to the lesion. This chain is UV DNA damage endonuclease, found in Bacillus anthracis (strain A0248).